A 630-amino-acid chain; its full sequence is MAAGVAAWLPFARAAAIGWMPVASGPMPAPPRQERKRTQDALIVLNVSGTRFQTWQDTLERYPDTLLGSSERDFFYHPETQQYFFDRDPDIFRHILNFYRTGKLHYPRHECISAYDEELAFFGLIPEIIGDCCYEEYKDRRRENAERLQDDADTDNTCESALPTMTARQRVWRAFENPHTSTMALVFYYVTGFFIAVSVIANVVETVPCGSSPGHIKELPCGERYAVAFFCLDTACVMIFTVEYLLRLAAAPSRYRFVRSVMSIIDVVAILPYYIGLVMTDNEDVSGAFVTLRVFRVFRIFKFSRHSQGLRILGYTLKSCASELGFLLFSLTMAIIIFATVMFYAEKGSSASKFTSIPAAFWYTIVTMTTLGYGDMVPKTIAGKIFGSICSLSGVLVIALPVPVIVSNFSRIYHQNQRADKRRAQKKARLARIRAAKSGSANAYMQSKRNGLLSNQLQSSEEEPAFVSKSGSSFETQHHHLLHCLEKTTNHEFVDEQVFEESCMEVATVNRPSSHSPSLSSQQGVTSTCCSRRHKKTFRIPNANVSGSQRGSVQELSTIQIRCVERTPLSNSRSSLNAKMEECVKLNCEQPYVTTAIISIPTPPVTTPEGDDRPESPEYSGGNIVRVSAL.

At 1–184 (MAAGVAAWLP…FENPHTSTMA (184 aa)) the chain is on the cytoplasmic side. The interaction with KCNIP1, KCNIP2, and other family members stretch occupies residues 2 to 20 (AAGVAAWLPFARAAAIGWM). Position 38 is a phosphothreonine (T38). Residues 71 to 90 (ERDFFYHPETQQYFFDRDPD) form an interaction with KCNIP1 region. The Zn(2+) site is built by H105, C111, C132, and C133. A helical membrane pass occupies residues 185-206 (LVFYYVTGFFIAVSVIANVVET). Residues 207 to 226 (VPCGSSPGHIKELPCGERYA) are Extracellular-facing. Residues 227–249 (VAFFCLDTACVMIFTVEYLLRLA) traverse the membrane as a helical segment. Over 250–256 (AAPSRYR) the chain is Cytoplasmic. The chain crosses the membrane as a helical span at residues 257 to 281 (FVRSVMSIIDVVAILPYYIGLVMTD). Residues 282-287 (NEDVSG) lie on the Extracellular side of the membrane. Residues 288-307 (AFVTLRVFRVFRIFKFSRHS) form a helical; Voltage-sensor membrane-spanning segment. Residues 308 to 321 (QGLRILGYTLKSCA) are Cytoplasmic-facing. The S4-S5 linker stretch occupies residues 308–321 (QGLRILGYTLKSCA). Residues 322–345 (SELGFLLFSLTMAIIIFATVMFYA) traverse the membrane as a helical segment. Topologically, residues 346-357 (EKGSSASKFTSI) are extracellular. Residues 358 to 369 (PAAFWYTIVTMT) constitute an intramembrane region (helical). Positions 370, 371, 372, and 373 each coordinate K(+). A Selectivity filter motif is present at residues 370-375 (TLGYGD). The stretch at 370–377 (TLGYGDMV) is an intramembrane region. At 378–380 (PKT) the chain is on the extracellular side. Residues 381–403 (IAGKIFGSICSLSGVLVIALPVP) form a helical membrane-spanning segment. Residues 404 to 630 (VIVSNFSRIY…GGNIVRVSAL (227 aa)) are Cytoplasmic-facing. The residue at position 438 (S438) is a Phosphoserine. Residues 474–489 (FETQHHHLLHCLEKTT) are required for dendritic targeting. The segment at 474 to 630 (FETQHHHLLH…GGNIVRVSAL (157 aa)) is important for normal channel activation and inactivation, for interaction with KCNIP2, and probably other family members as well. 4 positions are modified to phosphoserine: S548, S552, S572, and S575. Residues 600 to 623 (IPTPPVTTPEGDDRPESPEYSGGN) are disordered. A phosphothreonine mark is found at T602 and T607. S616 bears the Phosphoserine mark. The PDZ-binding motif lies at 627–630 (VSAL).

This sequence belongs to the potassium channel family. D (Shal) (TC 1.A.1.2) subfamily. Kv4.2/KCND2 sub-subfamily. As to quaternary structure, homotetramer or heterotetramer with KCND1 or KCND3. Associates with the regulatory subunits KCNIP1, KCNIP2, KCNIP3 and KCNIP4. Interacts with DPP6, DPP10, DLG4 and DLG1. In vivo, probably exists as heteromeric complex containing variable proportions of KCND1, KCND2, KCND3, KCNIP1, KCNIP2, KCNIP3, KCNIP4, DPP6 and DPP10. The tetrameric channel can associate with up to four regulatory subunits, such as KCNIP2 or KCNIP4. Interaction with KCNIP3 promotes tetramerization and formation of a functional potassium channel. Interaction with four KCNIP4 chains does not reduce interaction with DPP10. Probably part of a complex consisting of KCNIP1, KCNIP2 isoform 3 and KCND2. Interacts with FLNA and FLNC. Interacts with NCS1/FREQ. Identified in a complex with cAMP-dependent protein kinase (PKA), CAV3, AKAP6 and KCND3 in cardiac myocytes. Interacts (via S1 and S2 helices) with DPP6; this interaction stabilizes the conformation of the S1-S2 helices and facilitates S4 conformational change, including S4 sliding up and down, thereby accelerating activation, inactivation, and recovery. In terms of processing, phosphorylation at Ser-438 in response to MAPK activation is increased in stimulated dendrites. Interaction with KCNIP2 and DPP6 propomtes phosphorylation by PKA at Ser-552. Phosphorylation at Ser-552 has no effect on interaction with KCNIP3, but is required for the regulation of channel activity by KCNIP3. Phosphorylation at Ser-552 leads to KCND2 internalization. Phosphorylated by MAPK in response to signaling via the metabotropic glutamate receptor GRM5. Phosphorylation at Ser-616 is required for the down-regulation of neuronal A-type currents in response to signaling via GRM5. Detected in brain frontal cortex.

It is found in the cell membrane. It localises to the cell projection. The protein localises to the dendrite. Its subcellular location is the synapse. The protein resides in the perikaryon. It is found in the postsynaptic cell membrane. It localises to the dendritic spine. The protein localises to the sarcolemma. Its subcellular location is the cell junction. The protein resides in the membrane. It is found in the caveola. It carries out the reaction K(+)(in) = K(+)(out). Voltage-gated potassium channel that mediates transmembrane potassium transport in excitable membranes, primarily in the brain. Mediates the major part of the dendritic A-type current I(SA) in brain neurons. This current is activated at membrane potentials that are below the threshold for action potentials. It regulates neuronal excitability, prolongs the latency before the first spike in a series of action potentials, regulates the frequency of repetitive action potential firing, shortens the duration of action potentials and regulates the back-propagation of action potentials from the neuronal cell body to the dendrites. Contributes to the regulation of the circadian rhythm of action potential firing in suprachiasmatic nucleus neurons, which regulates the circadian rhythm of locomotor activity. Functions downstream of the metabotropic glutamate receptor GRM5 and plays a role in neuronal excitability and in nociception mediated by activation of GRM5. Mediates the transient outward current I(to) in rodent heart left ventricle apex cells, but not in human heart, where this current is mediated by another family member. Forms tetrameric potassium-selective channels through which potassium ions pass in accordance with their electrochemical gradient. The channel alternates between opened and closed conformations in response to the voltage difference across the membrane. Can form functional homotetrameric channels and heterotetrameric channels that contain variable proportions of KCND2 and KCND3; channel properties depend on the type of pore-forming alpha subunits that are part of the channel. In vivo, membranes probably contain a mixture of heteromeric potassium channel complexes. Interaction with specific isoforms of the regulatory subunits KCNIP1, KCNIP2, KCNIP3 or KCNIP4 strongly increases expression at the cell surface and thereby increases channel activity; it modulates the kinetics of channel activation and inactivation, shifts the threshold for channel activation to more negative voltage values, shifts the threshold for inactivation to less negative voltages and accelerates recovery after inactivation. Likewise, interaction with DPP6 or DPP10 promotes expression at the cell membrane and regulates both channel characteristics and activity. Upon depolarization, the channel goes from a resting closed state (C state) to an activated but non-conducting state (C* state), from there, the channel may either inactivate (I state) or open (O state). In Oryctolagus cuniculus (Rabbit), this protein is A-type voltage-gated potassium channel KCND2.